The following is a 116-amino-acid chain: Immunoglobulin heavy variable 3-13 (116 aa).

The first 19 residues, 1–19 (MELGLSWVFLVAILEGVQC), serve as a signal peptide directing secretion. Positions 20–44 (EVQLVESGGGLVQPGGSLRLSCAAS) are framework-1. One can recognise an Ig-like domain in the interval 20–116 (EVQLVESGGG…GDTAVYYCAR (97 aa)). Cys41 and Cys114 form a disulfide bridge. Residues 45–52 (GFTFSSYD) form a complementarity-determining-1 region. The framework-2 stretch occupies residues 53-69 (MHWVRQATGKGLEWVSA). The tract at residues 70–76 (IGTAGDP) is complementarity-determining-2. The interval 77–114 (YYPGSVKGRFTISRENAKNSLYLQMNSLRAGDTAVYYC) is framework-3. The tract at residues 115 to 116 (AR) is complementarity-determining-3.

In terms of assembly, immunoglobulins are composed of two identical heavy chains and two identical light chains; disulfide-linked.

It is found in the secreted. It localises to the cell membrane. Functionally, v region of the variable domain of immunoglobulin heavy chains that participates in the antigen recognition. Immunoglobulins, also known as antibodies, are membrane-bound or secreted glycoproteins produced by B lymphocytes. In the recognition phase of humoral immunity, the membrane-bound immunoglobulins serve as receptors which, upon binding of a specific antigen, trigger the clonal expansion and differentiation of B lymphocytes into immunoglobulins-secreting plasma cells. Secreted immunoglobulins mediate the effector phase of humoral immunity, which results in the elimination of bound antigens. The antigen binding site is formed by the variable domain of one heavy chain, together with that of its associated light chain. Thus, each immunoglobulin has two antigen binding sites with remarkable affinity for a particular antigen. The variable domains are assembled by a process called V-(D)-J rearrangement and can then be subjected to somatic hypermutations which, after exposure to antigen and selection, allow affinity maturation for a particular antigen. The sequence is that of Immunoglobulin heavy variable 3-13 from Homo sapiens (Human).